Consider the following 469-residue polypeptide: Phenolic glucoside malonyltransferase 1 (469 aa).

Methionine 1 bears the N-acetylmethionine mark. The active-site Proton acceptor is histidine 169. Residues 169–173 (HAVLD) carry the HXXXD motif motif. 291–292 (ST) serves as a coordination point for malonyl-CoA. Aspartate 413 (proton acceptor) is an active-site residue. Residues 413–417 (DFGWG) carry the DFGWG motif motif.

The protein belongs to the plant acyltransferase family. Phenolic glucoside malonyltransferase subfamily.

The enzyme catalyses a flavonol 3-O-beta-D-glucoside + malonyl-CoA = a flavonol 3-O-(6-O-malonyl-beta-D-glucoside) + CoA. It carries out the reaction a flavonol 7-O-beta-D-glucoside + malonyl-CoA = a flavonol 7-O-(6-O-malonyl-beta-D-glucoside) + CoA. In terms of biological role, malonyltransferase acting on xenobiotic glucosides. Has activity toward 2-Naphthol glucoside (2NAG), 1-Naphthol glucoside (1NAG), kaempferol 7-O-glucoside, kaempferol 3-O-glucoside, hydroxycoumarin glucosides, phenol-glucosides and isoflavone glucoside (daidzin), but not toward 4-coumaroyl glucoside, kaempferol 3,7-O-diglucoside, salicylic acid glucoside and phlorizin. In vivo, seems to be involved in the malonylation of 2-Naphthol glucoside while PMAT2 would be involved in the malonylation of 4-methylumbelliferone glucoside or 4-nitrophenyl glucoside. The protein is Phenolic glucoside malonyltransferase 1 (PMAT1) of Arabidopsis thaliana (Mouse-ear cress).